The following is a 252-amino-acid chain: HTH-type transcriptional regulator XynR (252 aa).

An HTH iclR-type domain is found at 4–66; that stretch reads IQSVERALQI…PENGKYRLGM (63 aa). Residues 25 to 45 constitute a DNA-binding region (H-T-H motif); sequence KITDISKLMGLSKSTLHSLLK. The IclR-ED domain maps to 81-250; the sequence is IRQKAKGWLT…GLALSRALGY (170 aa).

Activity may be controlled by xylonate. Functionally, involved in regulation of xylonate catabolism. Represses the expression of both yagA and yagEF operons. Binds mainly at a single site within the spacer of the bidirectional transcription units yagA and yagEF. The protein is HTH-type transcriptional regulator XynR of Escherichia coli (strain K12).